We begin with the raw amino-acid sequence, 394 residues long: NAD(P)H-quinone oxidoreductase subunit H (394 aa).

This sequence belongs to the complex I 49 kDa subunit family. In terms of assembly, NDH-1 can be composed of about 15 different subunits; different subcomplexes with different compositions have been identified which probably have different functions.

Its subcellular location is the cellular thylakoid membrane. It carries out the reaction a plastoquinone + NADH + (n+1) H(+)(in) = a plastoquinol + NAD(+) + n H(+)(out). The catalysed reaction is a plastoquinone + NADPH + (n+1) H(+)(in) = a plastoquinol + NADP(+) + n H(+)(out). NDH-1 shuttles electrons from an unknown electron donor, via FMN and iron-sulfur (Fe-S) centers, to quinones in the respiratory and/or the photosynthetic chain. The immediate electron acceptor for the enzyme in this species is believed to be plastoquinone. Couples the redox reaction to proton translocation, and thus conserves the redox energy in a proton gradient. Cyanobacterial NDH-1 also plays a role in inorganic carbon-concentration. This chain is NAD(P)H-quinone oxidoreductase subunit H, found in Synechococcus sp. (strain JA-3-3Ab) (Cyanobacteria bacterium Yellowstone A-Prime).